Consider the following 373-residue polypeptide: Glutamine synthetase (373 aa).

Residue T2 is modified to N-acetylthreonine. The required for glutamine-induced ubiquitination by CRL4(CRBN) and proteasomal degradation stretch occupies residues T2–K25. An N6-acetyllysine; by EP300 mark is found at K11 and K14. The region spanning E24 to R106 is the GS beta-grasp domain. Y104 bears the Phosphotyrosine mark. The region spanning L113–N373 is the GS catalytic domain. E134 is a binding site for ATP. Mn(2+) contacts are provided by E134, E136, E196, and E203. E203–P208 is a binding site for ATP. N246 to W247 serves as a coordination point for L-glutamate. A Mn(2+)-binding site is contributed by H253. Residues N255–S257, R319, and R324 contribute to the ATP site. Residue R319 coordinates L-glutamate. Residue Y336–E338 coordinates ADP. E338 serves as a coordination point for Mn(2+). An L-glutamate-binding site is contributed by R340. The residue at position 343 (S343) is a Phosphoserine.

The protein belongs to the glutamine synthetase family. Decamer; composed of two pentamers. Interacts with PALMD. Interacts with RHOJ. Interacts with BEST2; this interaction tethers a fraction of GLUL to the membrane, causing a decrease of cytosolic glutamine synthase (GS) activity and inhibits the chloride channel activity of BEST2 by affecting the gating at the aperture in the absence of intracellular glutamate. Requires Mg(2+) as cofactor. Mn(2+) is required as a cofactor. Post-translationally, acetylated by EP300/p300; acetylation is stimulated by increased glutamine levels and promotes ubiquitin-mediated proteasomal degradation. Palmitoylated; undergoes autopalmitoylation. In terms of processing, ubiquitinated by ZNRF1. Ubiquitinated by the DCX (DDB1-CUL4-X-box) E3 ubiquitin-protein ligase complex called CRL4(CRBN), leading to proteasomal degradation. In terms of tissue distribution, expressed in endothelial cells.

It localises to the cytoplasm. It is found in the cytosol. The protein resides in the microsome. The protein localises to the mitochondrion. Its subcellular location is the cell membrane. It catalyses the reaction L-glutamate + NH4(+) + ATP = L-glutamine + ADP + phosphate + H(+). The catalysed reaction is L-cysteinyl-[protein] + hexadecanoyl-CoA = S-hexadecanoyl-L-cysteinyl-[protein] + CoA. Glutamine synthetase activity is inhibited by methionine sulfoximine (MSO). Its function is as follows. Glutamine synthetase that catalyzes the ATP-dependent conversion of glutamate and ammonia to glutamine. Its role depends on tissue localization: in the brain, it regulates the levels of toxic ammonia and converts neurotoxic glutamate to harmless glutamine, whereas in the liver, it is one of the enzymes responsible for the removal of ammonia. Plays a key role in ammonium detoxification during erythropoiesis: the glutamine synthetase activity is required to remove ammonium generated by porphobilinogen deaminase (HMBS) during heme biosynthesis to prevent ammonium accumulation and oxidative stress. Essential for proliferation of fetal skin fibroblasts. Independently of its glutamine synthetase activity, required for endothelial cell migration during vascular development: acts by regulating membrane localization and activation of the GTPase RHOJ, possibly by promoting RHOJ palmitoylation. May act as a palmitoyltransferase for RHOJ: able to autopalmitoylate and then transfer the palmitoyl group to RHOJ. Plays a role in ribosomal 40S subunit biogenesis. Through the interaction with BEST2, inhibits BEST2 channel activity by affecting the gating at the aperture in the absence of intracellular L-glutamate, but sensitizes BEST2 to intracellular L-glutamate, which promotes the opening of BEST2 and thus relieves its inhibitory effect on BEST2. The chain is Glutamine synthetase from Homo sapiens (Human).